Here is a 285-residue protein sequence, read N- to C-terminus: Putative quercetin 2,3-dioxygenase PA3240 (285 aa).

A divalent metal cation-binding residues include H60, H62, H104, and E106.

This sequence belongs to the pirin family. Requires a divalent metal cation as cofactor.

The enzyme catalyses quercetin + O2 = 2-(3,4-dihydroxybenzoyloxy)-4,6-dihydroxybenzoate + CO. It functions in the pathway flavonoid metabolism; quercetin degradation. Putative quercetin 2,3-dioxygenase. The sequence is that of Putative quercetin 2,3-dioxygenase PA3240 from Pseudomonas aeruginosa (strain ATCC 15692 / DSM 22644 / CIP 104116 / JCM 14847 / LMG 12228 / 1C / PRS 101 / PAO1).